The chain runs to 370 residues: Homospermidine synthase 2 (370 aa).

It belongs to the deoxyhypusine synthase family. As to quaternary structure, homotetramer. The cofactor is NAD(+). Post-translationally, the N-terminus is blocked. In terms of tissue distribution, expressed in roots.

The enzyme catalyses putrescine + spermidine = sym-homospermidine + propane-1,3-diamine. It functions in the pathway alkaloid biosynthesis; pyrrolizidine alkaloid biosynthesis. In terms of biological role, catalyzes the transfer of an aminobutyl unit from spermidine onto putrescine. The resulting polyamine homospermidine is a precursor in the biosynthesis of pyrrolizidine alkaloids. This chain is Homospermidine synthase 2, found in Senecio vernalis (Spring groundsel).